We begin with the raw amino-acid sequence, 325 residues long: Olfactory receptor 14L1 (325 aa).

The Extracellular portion of the chain corresponds to 1–43; it reads MAQFNKNQLIACRRNGTTTSDFNQTEVAEFFLMGFSNSWDIQI. Residues 44-64 form a helical membrane-spanning segment; sequence VHAALFFLVYLAAVIGNLLII. Over 65-72 the chain is Cytoplasmic; the sequence is ILTTLDVH. A helical membrane pass occupies residues 73–93; sequence LQTPMYFFLRNLSFLDFCYIS. At 94–117 the chain is on the extracellular side; sequence VTIPKSIVSSLTHDTSISFFGCAL. Residues 118 to 138 form a helical membrane-spanning segment; the sequence is QAFFFMDLATTEVAILTVMSY. At 139–151 the chain is on the cytoplasmic side; the sequence is DRYMAICRPLHYE. A helical transmembrane segment spans residues 152–172; the sequence is VIINQGVCLRMMAMSWLSGVI. The Extracellular portion of the chain corresponds to 173–214; that stretch reads CGFMHVIATFSLPFCGRNRIRQFFCNIPQLLSLLDPKVITIE. A helical transmembrane segment spans residues 215-235; the sequence is IGVMVFGTSLVIISFVVITLS. Topologically, residues 236–255 are cytoplasmic; the sequence is YMYIFSVIMRIPSKEGRSKT. Residues 256 to 276 form a helical membrane-spanning segment; that stretch reads FSTCIPHLVVVTLFMISGSIA. Over 277-289 the chain is Extracellular; it reads YVKPISNSPPVLD. A helical transmembrane segment spans residues 290 to 310; that stretch reads VFLSAFYTVVPPTLNPVIYSL. At 311–325 the chain is on the cytoplasmic side; the sequence is RNRDMKAALRRQCGP.

The protein belongs to the G-protein coupled receptor 1 family.

The protein localises to the cell membrane. Functionally, odorant receptor. This is Olfactory receptor 14L1 from Homo sapiens (Human).